The primary structure comprises 319 residues: Ornithine carbamoyltransferase (319 aa).

Residues 55–58 (STRT), Gln82, Arg106, and 133–136 (HPCQ) each bind carbamoyl phosphate. L-ornithine contacts are provided by residues Asn171, Asp234, and 238-239 (SM). Carbamoyl phosphate-binding positions include 274 to 275 (CL) and Arg302.

The protein belongs to the aspartate/ornithine carbamoyltransferase superfamily. OTCase family.

It localises to the cytoplasm. It carries out the reaction carbamoyl phosphate + L-ornithine = L-citrulline + phosphate + H(+). It participates in amino-acid biosynthesis; L-arginine biosynthesis; L-arginine from L-ornithine and carbamoyl phosphate: step 1/3. Reversibly catalyzes the transfer of the carbamoyl group from carbamoyl phosphate (CP) to the N(epsilon) atom of ornithine (ORN) to produce L-citrulline. The sequence is that of Ornithine carbamoyltransferase (argF) from Corynebacterium glutamicum (strain ATCC 13032 / DSM 20300 / JCM 1318 / BCRC 11384 / CCUG 27702 / LMG 3730 / NBRC 12168 / NCIMB 10025 / NRRL B-2784 / 534).